A 704-amino-acid chain; its full sequence is Elongation factor G (704 aa).

Positions 8–290 (ARYRNIGISA…AVIDYLPAPT (283 aa)) constitute a tr-type G domain. GTP-binding positions include 17–24 (AHIDAGKT), 88–92 (DTPGH), and 142–145 (NKMD).

It belongs to the TRAFAC class translation factor GTPase superfamily. Classic translation factor GTPase family. EF-G/EF-2 subfamily.

Its subcellular location is the cytoplasm. In terms of biological role, catalyzes the GTP-dependent ribosomal translocation step during translation elongation. During this step, the ribosome changes from the pre-translocational (PRE) to the post-translocational (POST) state as the newly formed A-site-bound peptidyl-tRNA and P-site-bound deacylated tRNA move to the P and E sites, respectively. Catalyzes the coordinated movement of the two tRNA molecules, the mRNA and conformational changes in the ribosome. The sequence is that of Elongation factor G from Pectobacterium atrosepticum (strain SCRI 1043 / ATCC BAA-672) (Erwinia carotovora subsp. atroseptica).